A 545-amino-acid chain; its full sequence is CTP synthase (545 aa).

The interval 1–266 is amidoligase domain; the sequence is MTTNYIFVTG…DDLVCARFGI (266 aa). Ser14 lines the CTP pocket. Residue Ser14 coordinates UTP. ATP-binding positions include 15–20 and Asp72; that span reads SLGKGI. Residues Asp72 and Glu140 each contribute to the Mg(2+) site. CTP-binding positions include 147 to 149, 187 to 192, and Lys223; these read DIE and KTKPTQ. UTP contacts are provided by residues 187–192 and Lys223; that span reads KTKPTQ. An ATP-binding site is contributed by 239–241; that stretch reads KDV. The 252-residue stretch at 291–542 folds into the Glutamine amidotransferase type-1 domain; it reads TIGMVGKYIE…IKAAGENARG (252 aa). L-glutamine is bound at residue Gly352. Cys379 acts as the Nucleophile; for glutamine hydrolysis in catalysis. Residues 380–383, Glu403, and Arg470 each bind L-glutamine; that span reads LGMQ. Active-site residues include His515 and Glu517.

The protein belongs to the CTP synthase family. In terms of assembly, homotetramer.

The enzyme catalyses UTP + L-glutamine + ATP + H2O = CTP + L-glutamate + ADP + phosphate + 2 H(+). The catalysed reaction is L-glutamine + H2O = L-glutamate + NH4(+). It carries out the reaction UTP + NH4(+) + ATP = CTP + ADP + phosphate + 2 H(+). Its pathway is pyrimidine metabolism; CTP biosynthesis via de novo pathway; CTP from UDP: step 2/2. Its activity is regulated as follows. Allosterically activated by GTP, when glutamine is the substrate; GTP has no effect on the reaction when ammonia is the substrate. The allosteric effector GTP functions by stabilizing the protein conformation that binds the tetrahedral intermediate(s) formed during glutamine hydrolysis. Inhibited by the product CTP, via allosteric rather than competitive inhibition. Its function is as follows. Catalyzes the ATP-dependent amination of UTP to CTP with either L-glutamine or ammonia as the source of nitrogen. Regulates intracellular CTP levels through interactions with the four ribonucleotide triphosphates. The polypeptide is CTP synthase (Vibrio vulnificus (strain CMCP6)).